A 234-amino-acid polypeptide reads, in one-letter code: Small ribosomal subunit protein eS4 (234 aa).

The region spanning 37–99 (VPLLIVLRDV…REEYYRVFPG (63 aa)) is the S4 RNA-binding domain.

This sequence belongs to the eukaryotic ribosomal protein eS4 family.

The sequence is that of Small ribosomal subunit protein eS4 (rps4e) from Haloarcula marismortui (strain ATCC 43049 / DSM 3752 / JCM 8966 / VKM B-1809) (Halobacterium marismortui).